We begin with the raw amino-acid sequence, 56 residues long: Sperm protamine P1 (56 aa).

Positions 1 to 56 (RLSRRRVYSIGGRRRRRRRRSRGRRGRRRGRRRGRRRGRRRGRRRRRRRGGRRRRR) are disordered.

Post-translationally, P2 is phosphorylated in immature sperm. It is dephosphorylated in mature sperm allowing a stronger interaction with DNA. Testis.

The protein resides in the nucleus. It is found in the chromosome. In terms of biological role, protamines substitute for histones in the chromatin of sperm during the haploid phase of spermatogenesis. They compact sperm DNA into a highly condensed, stable and inactive complex. Functionally, octopus spermiogenesis is characterized by a double nuclear protein transition: Histones are first replaced by P1, which allows the chromatin to adopt a shape that is not as relaxed as with histones. The majority of P1 is later replaced by P2, forming a compact chromatin. P2 is the main protamine of sperm. This chain is Sperm protamine P1, found in Octopus vulgaris (Common octopus).